Reading from the N-terminus, the 157-residue chain is Selenoprotein F (157 aa).

A signal peptide spans 1–19 (MSGEVYILWLLSLIQTLSA). Residue selenocysteine 84 is a non-standard amino acid, selenocysteine.

This sequence belongs to the selenoprotein M/F family. In terms of tissue distribution, expressed in the brain, liver and retina. Localized to the retinal ganglion cell layer, the inner nuclear layer and the outer nuclear layer at both parr and smolt stages.

The protein localises to the endoplasmic reticulum lumen. In terms of biological role, may be involved in redox reactions associated with the formation of disulfide bonds. May contribute to the quality control of protein folding in the endoplasmic reticulum. May be involved in retinal development. In Oncorhynchus mykiss (Rainbow trout), this protein is Selenoprotein F.